The sequence spans 207 residues: Glycerol-3-phosphate acyltransferase (207 aa).

The next 5 helical transmembrane spans lie at 4–24 (VVATVVFAVAAYLIGSVSFAV), 58–78 (ILTLLGDAAKGWLAVWLAQLL), 86–106 (DMGIALVVIAAFLGHLYPVFH), 120–140 (ILLALSGWLGLATLATWLIIA), and 162–182 (VLLFGIDPLAGAIAVMSVLLI).

Belongs to the PlsY family. Probably interacts with PlsX.

Its subcellular location is the cell inner membrane. The enzyme catalyses an acyl phosphate + sn-glycerol 3-phosphate = a 1-acyl-sn-glycero-3-phosphate + phosphate. Its pathway is lipid metabolism; phospholipid metabolism. In terms of biological role, catalyzes the transfer of an acyl group from acyl-phosphate (acyl-PO(4)) to glycerol-3-phosphate (G3P) to form lysophosphatidic acid (LPA). This enzyme utilizes acyl-phosphate as fatty acyl donor, but not acyl-CoA or acyl-ACP. In Ralstonia nicotianae (strain ATCC BAA-1114 / GMI1000) (Ralstonia solanacearum), this protein is Glycerol-3-phosphate acyltransferase.